Reading from the N-terminus, the 290-residue chain is ATP synthase gamma chain (290 aa).

The protein belongs to the ATPase gamma chain family. In terms of assembly, F-type ATPases have 2 components, CF(1) - the catalytic core - and CF(0) - the membrane proton channel. CF(1) has five subunits: alpha(3), beta(3), gamma(1), delta(1), epsilon(1). CF(0) has three main subunits: a, b and c.

The protein localises to the cell inner membrane. Functionally, produces ATP from ADP in the presence of a proton gradient across the membrane. The gamma chain is believed to be important in regulating ATPase activity and the flow of protons through the CF(0) complex. This chain is ATP synthase gamma chain, found in Desulfotalea psychrophila (strain LSv54 / DSM 12343).